Reading from the N-terminus, the 269-residue chain is Ribosomal RNA small subunit methyltransferase J (269 aa).

Residues 125-126 and D179 each bind S-adenosyl-L-methionine; that span reads ER.

This sequence belongs to the methyltransferase superfamily. RsmJ family.

It localises to the cytoplasm. It catalyses the reaction guanosine(1516) in 16S rRNA + S-adenosyl-L-methionine = N(2)-methylguanosine(1516) in 16S rRNA + S-adenosyl-L-homocysteine + H(+). Its function is as follows. Specifically methylates the guanosine in position 1516 of 16S rRNA. The sequence is that of Ribosomal RNA small subunit methyltransferase J from Pseudomonas syringae pv. syringae (strain B728a).